Here is a 493-residue protein sequence, read N- to C-terminus: Solute carrier family 2, facilitated glucose transporter member 3 (493 aa).

The Cytoplasmic segment spans residues 1-10 (MGTTKVTPSL). A helical transmembrane segment spans residues 11 to 32 (VFAVTVATIGSFQFGYNTGVIN). The Extracellular portion of the chain corresponds to 33-64 (APETILKDFLNYTLEERLEDLPSEGLLTALWS). An N-linked (GlcNAc...) asparagine glycan is attached at N43. Residues 65–85 (LCVAIFSVGGMIGSFSVGLFV) traverse the membrane as a helical segment. The Cytoplasmic segment spans residues 86 to 90 (NRFGR). A helical transmembrane segment spans residues 91 to 111 (RNSMLLVNLLAIIAGCLMGFA). The Extracellular segment spans residues 112–118 (KIAESVE). A helical membrane pass occupies residues 119–142 (MLILGRLLIGIFCGLCTGFVPMYI). The Cytoplasmic segment spans residues 143–153 (GEVSPTALRGA). Residues 154 to 174 (FGTLNQLGIVVGILVAQIFGL) form a helical membrane-spanning segment. Q159 contributes to the D-glucose binding site. The Extracellular portion of the chain corresponds to 175–183 (DFILGSEEL). A helical transmembrane segment spans residues 184–204 (WPGLLGLTIIPAILQSAALPF). Residues 205-269 (CPESPRFLLI…LFRSPNYVQP (65 aa)) are Cytoplasmic-facing. At T232 the chain carries Phosphothreonine. A helical membrane pass occupies residues 270-290 (LLISIVLQLSQQLSGINAVFY). The segment at 277 to 279 (QLS) is important for selectivity against fructose. Residues 280–281 (QQ) and N286 each bind D-glucose. The Extracellular segment spans residues 291-304 (YSTGIFKDAGVQEP). A helical transmembrane segment spans residues 305-325 (IYATIGAGVVNTIFTVVSLFL). N315 is a D-glucose binding site. The Cytoplasmic portion of the chain corresponds to 326–331 (VERAGR). Residues 332-352 (RTLHMIGLGGMAVCSVFMTIS) form a helical membrane-spanning segment. At 353–363 (LLLKDDYEAMS) the chain is on the extracellular side. Residues 364 to 389 (FVCIVAILIYVAFFEIGPGPIPWFIV) form a helical membrane-spanning segment. 2 residues coordinate D-glucose: E378 and W386. Residues 390–399 (AELFSQGPRP) are Cytoplasmic-facing. A helical transmembrane segment spans residues 400 to 420 (AAIAVAGCCNWTSNFLVGMLF). Over 421–429 (PSAAAYLGA) the chain is Extracellular. Residues 430–450 (YVFIIFAAFLIFFLIFTFFKV) traverse the membrane as a helical segment. At 451–493 (PETKGRTFEDIARAFEGQAHSGKGPAGVELNSMQPVKETPGNA) the chain is on the cytoplasmic side. A disordered region spans residues 469 to 493 (AHSGKGPAGVELNSMQPVKETPGNA). Phosphoserine is present on residues S471 and S482. T489 bears the Phosphothreonine mark.

The protein belongs to the major facilitator superfamily. Sugar transporter (TC 2.A.1.1) family. Glucose transporter subfamily. Interacts with SMIM43; the interaction may promote SLC2A3-mediated glucose transport to meet the energy needs of mesendoderm differentiation. In terms of tissue distribution, expressed in spermatozoa (at protein level). Detected in brain (at protein level). Abundantly expressed in the hippocampus, cerebellum and cerebral cortex with lower expression in the dentate gyrus and piriform cortex.

It localises to the cell membrane. The protein resides in the perikaryon. It is found in the cell projection. It carries out the reaction D-glucose(out) = D-glucose(in). The catalysed reaction is D-galactose(in) = D-galactose(out). Its activity is regulated as follows. Deoxyglucose transport is inhibited by D-glucose, D-galactose and maltose. Galactose transport is inhibited by D-glucose and maltose. Facilitative glucose transporter. Can also mediate the uptake of various other monosaccharides across the cell membrane. Mediates the uptake of glucose, 2-deoxyglucose, galactose, mannose, xylose and fucose, and probably also dehydroascorbate. Does not mediate fructose transport. Required for mesendoderm differentiation. This is Solute carrier family 2, facilitated glucose transporter member 3 from Mus musculus (Mouse).